Reading from the N-terminus, the 219-residue chain is Probable glucosamine 6-phosphate N-acetyltransferase (219 aa).

The N-acetyltransferase domain occupies Met-42–Thr-198. Substrate-binding positions include Thr-64, Lys-111–His-114, and Glu-123–Val-125. Gly-133–Lys-138 lines the acetyl-CoA pocket. Substrate-binding positions include Tyr-154–Lys-155 and Arg-186.

This sequence belongs to the acetyltransferase family. GNA1 subfamily.

It catalyses the reaction D-glucosamine 6-phosphate + acetyl-CoA = N-acetyl-D-glucosamine 6-phosphate + CoA + H(+). Its pathway is nucleotide-sugar biosynthesis; UDP-N-acetyl-alpha-D-glucosamine biosynthesis; N-acetyl-alpha-D-glucosamine 1-phosphate from alpha-D-glucosamine 6-phosphate (route I): step 1/2. The protein is Probable glucosamine 6-phosphate N-acetyltransferase of Drosophila melanogaster (Fruit fly).